We begin with the raw amino-acid sequence, 1171 residues long: Putative tricorn protease homolog 2 (1171 aa).

Positions 432 to 498 are disordered; it reads AGYPPDAGDE…GSPGTPATAG (67 aa). Low complexity-rich tracts occupy residues 444-456 and 466-498; these read AGTAARADSAPDA and IAAGTGTGDIADADAAAGGTVTPGSPGTPATAG. The active-site Charge relay system is histidine 827. Residues 842-941 form a PDZ-like region; that stretch reads YQRWQGLLGA…RVAVVPLVDE (100 aa). 1002-1004 is a binding site for substrate; it reads AGG. Residue serine 1051 is the Nucleophile of the active site. 1079 to 1081 is a substrate binding site; that stretch reads GMT. Glutamate 1109 (charge relay system) is an active-site residue. The interval 1149 to 1171 is disordered; the sequence is PPATPPGYEAVPDRSRPPLPPRE. A compositionally biased stretch (basic and acidic residues) spans 1159 to 1171; that stretch reads VPDRSRPPLPPRE.

It belongs to the peptidase S41B family.

Its subcellular location is the cytoplasm. In terms of biological role, degrades oligopeptides in a sequential manner. This Streptomyces coelicolor (strain ATCC BAA-471 / A3(2) / M145) protein is Putative tricorn protease homolog 2 (tri2).